The sequence spans 741 residues: Phosphoribosylformylglycinamidine synthase subunit PurL (741 aa).

The active site involves His53. ATP contacts are provided by Tyr56 and Lys95. Glu97 is a binding site for Mg(2+). Substrate is bound by residues 98–101 (SHNH) and Arg120. His99 serves as the catalytic Proton acceptor. Asp121 lines the Mg(2+) pocket. Residue Gln244 coordinates substrate. Asp274 lines the Mg(2+) pocket. Residue 318 to 320 (ESQ) coordinates substrate. ATP contacts are provided by Asp501 and Gly538. Asn539 lines the Mg(2+) pocket. Ser541 contacts substrate.

Belongs to the FGAMS family. Monomer. Part of the FGAM synthase complex composed of 1 PurL, 1 PurQ and 2 PurS subunits.

Its subcellular location is the cytoplasm. It carries out the reaction N(2)-formyl-N(1)-(5-phospho-beta-D-ribosyl)glycinamide + L-glutamine + ATP + H2O = 2-formamido-N(1)-(5-O-phospho-beta-D-ribosyl)acetamidine + L-glutamate + ADP + phosphate + H(+). Its pathway is purine metabolism; IMP biosynthesis via de novo pathway; 5-amino-1-(5-phospho-D-ribosyl)imidazole from N(2)-formyl-N(1)-(5-phospho-D-ribosyl)glycinamide: step 1/2. In terms of biological role, part of the phosphoribosylformylglycinamidine synthase complex involved in the purines biosynthetic pathway. Catalyzes the ATP-dependent conversion of formylglycinamide ribonucleotide (FGAR) and glutamine to yield formylglycinamidine ribonucleotide (FGAM) and glutamate. The FGAM synthase complex is composed of three subunits. PurQ produces an ammonia molecule by converting glutamine to glutamate. PurL transfers the ammonia molecule to FGAR to form FGAM in an ATP-dependent manner. PurS interacts with PurQ and PurL and is thought to assist in the transfer of the ammonia molecule from PurQ to PurL. In Latilactobacillus sakei subsp. sakei (strain 23K) (Lactobacillus sakei subsp. sakei), this protein is Phosphoribosylformylglycinamidine synthase subunit PurL.